We begin with the raw amino-acid sequence, 28 residues long: Phospholipase A2 (28 aa).

G28 contacts Ca(2+).

Ca(2+) serves as cofactor. As to expression, expressed by the venom gland.

Its subcellular location is the secreted. The enzyme catalyses a 1,2-diacyl-sn-glycero-3-phosphocholine + H2O = a 1-acyl-sn-glycero-3-phosphocholine + a fatty acid + H(+). Its function is as follows. PLA2 catalyzes the calcium-dependent hydrolysis of the 2-acyl groups in 3-sn-phosphoglycerides. The protein is Phospholipase A2 of Scolopendra dehaani (Thai centipede).